The following is a 131-amino-acid chain: Large ribosomal subunit protein bL12 (131 aa).

This sequence belongs to the bacterial ribosomal protein bL12 family. Homodimer. Part of the ribosomal stalk of the 50S ribosomal subunit. Forms a multimeric L10(L12)X complex, where L10 forms an elongated spine to which 2 to 4 L12 dimers bind in a sequential fashion. Binds GTP-bound translation factors.

Its function is as follows. Forms part of the ribosomal stalk which helps the ribosome interact with GTP-bound translation factors. Is thus essential for accurate translation. This is Large ribosomal subunit protein bL12 from Prochlorococcus marinus (strain NATL1A).